A 504-amino-acid polypeptide reads, in one-letter code: Maturase K (504 aa).

It belongs to the intron maturase 2 family. MatK subfamily.

The protein localises to the plastid. The protein resides in the chloroplast. Usually encoded in the trnK tRNA gene intron. Probably assists in splicing its own and other chloroplast group II introns. The polypeptide is Maturase K (Draba nemorosa (Woodland whitlowgrass)).